The primary structure comprises 282 residues: Pantothenate synthetase (282 aa).

Position 30 to 37 (30 to 37 (MGYLHEGH)) interacts with ATP. H37 (proton donor) is an active-site residue. Q61 is a binding site for (R)-pantoate. Q61 contacts beta-alanine. Residue 147-150 (GMKD) participates in ATP binding. Position 153 (Q153) interacts with (R)-pantoate. Residues V176 and 184–187 (KSSR) contribute to the ATP site.

Belongs to the pantothenate synthetase family. Homodimer.

The protein resides in the cytoplasm. The catalysed reaction is (R)-pantoate + beta-alanine + ATP = (R)-pantothenate + AMP + diphosphate + H(+). It participates in cofactor biosynthesis; (R)-pantothenate biosynthesis; (R)-pantothenate from (R)-pantoate and beta-alanine: step 1/1. Catalyzes the condensation of pantoate with beta-alanine in an ATP-dependent reaction via a pantoyl-adenylate intermediate. In Bacillus cytotoxicus (strain DSM 22905 / CIP 110041 / 391-98 / NVH 391-98), this protein is Pantothenate synthetase.